The following is a 389-amino-acid chain: S-adenosylmethionine synthase (389 aa).

An ATP-binding site is contributed by His-15. Mg(2+) is bound at residue Asp-17. Position 43 (Glu-43) interacts with K(+). Glu-56 and Gln-99 together coordinate L-methionine. A flexible loop region spans residues 99–109; the sequence is QSPDIAQGVNE. ATP is bound by residues 166 to 168, 234 to 235, Asp-243, 249 to 250, Ala-266, and Lys-270; these read DAK, RF, and RK. Asp-243 contributes to the L-methionine binding site. Lys-274 serves as a coordination point for L-methionine.

This sequence belongs to the AdoMet synthase family. As to quaternary structure, homotetramer; dimer of dimers. Requires Mg(2+) as cofactor. K(+) serves as cofactor.

Its subcellular location is the cytoplasm. The enzyme catalyses L-methionine + ATP + H2O = S-adenosyl-L-methionine + phosphate + diphosphate. Its pathway is amino-acid biosynthesis; S-adenosyl-L-methionine biosynthesis; S-adenosyl-L-methionine from L-methionine: step 1/1. Catalyzes the formation of S-adenosylmethionine (AdoMet) from methionine and ATP. The overall synthetic reaction is composed of two sequential steps, AdoMet formation and the subsequent tripolyphosphate hydrolysis which occurs prior to release of AdoMet from the enzyme. The sequence is that of S-adenosylmethionine synthase from Neisseria meningitidis serogroup C (strain 053442).